Consider the following 611-residue polypeptide: Depudecin biosynthesis cluster-specific transcription activator DEP6 (611 aa).

A DNA-binding region (zn(2)-C6 fungal-type) is located at residues 17–44; sequence CEICRQRKVRCDRALPRCRRCERLNQAC. The disordered stretch occupies residues 76–125; the sequence is DAPRGPASSMSSQSRSDSAAPAASRVPSVSASVPNSAATNPMDMVGTRSS. Positions 78-113 are enriched in low complexity; it reads PRGPASSMSSQSRSDSAAPAASRVPSVSASVPNSAA.

It localises to the nucleus. Transcription factor that positively regulates the expression of the gene cluster that mediates the biosynthesis of depudecin, a highly oxidized eleven-carbon linear polyketide that acts as a histone deacetylase (HDAC) inhibitor and makes a small contribution to pathogenesis. The chain is Depudecin biosynthesis cluster-specific transcription activator DEP6 from Fusarium langsethiae.